A 69-amino-acid polypeptide reads, in one-letter code: Cytochrome c oxidase subunit 8A, mitochondrial (69 aa).

The N-terminal 25 residues, 1–25, are a transit peptide targeting the mitochondrion; it reads MSVLTPLLLRSLTGSARRLMVPRAQ. An SIFI-degron motif is present at residues 2–19; sequence SVLTPLLLRSLTGSARRL. Topologically, residues 26–36 are mitochondrial matrix; it reads VHSKPAREQLG. The helical transmembrane segment at 37–60 threads the bilayer; the sequence is VLDITIGLTSCFVCCLLPAGWVLS. Topologically, residues 61 to 69 are mitochondrial intermembrane; the sequence is HLESYKKRE.

The protein belongs to the cytochrome c oxidase VIII family. As to quaternary structure, component of the cytochrome c oxidase (complex IV, CIV), a multisubunit enzyme composed of 14 subunits. The complex is composed of a catalytic core of 3 subunits MT-CO1, MT-CO2 and MT-CO3, encoded in the mitochondrial DNA, and 11 supernumerary subunits COX4I, COX5A, COX5B, COX6A, COX6B, COX6C, COX7A, COX7B, COX7C, COX8 and NDUFA4, which are encoded in the nuclear genome. The complex exists as a monomer or a dimer and forms supercomplexes (SCs) in the inner mitochondrial membrane with NADH-ubiquinone oxidoreductase (complex I, CI) and ubiquinol-cytochrome c oxidoreductase (cytochrome b-c1 complex, complex III, CIII), resulting in different assemblies (supercomplex SCI(1)III(2)IV(1) and megacomplex MCI(2)III(2)IV(2)). Post-translationally, in response to mitochondrial stress, the precursor protein is ubiquitinated by the SIFI complex in the cytoplasm before mitochondrial import, leading to its degradation. Within the SIFI complex, UBR4 initiates ubiquitin chain that are further elongated or branched by KCMF1.

It is found in the mitochondrion inner membrane. The protein operates within energy metabolism; oxidative phosphorylation. In terms of biological role, component of the cytochrome c oxidase, the last enzyme in the mitochondrial electron transport chain which drives oxidative phosphorylation. The respiratory chain contains 3 multisubunit complexes succinate dehydrogenase (complex II, CII), ubiquinol-cytochrome c oxidoreductase (cytochrome b-c1 complex, complex III, CIII) and cytochrome c oxidase (complex IV, CIV), that cooperate to transfer electrons derived from NADH and succinate to molecular oxygen, creating an electrochemical gradient over the inner membrane that drives transmembrane transport and the ATP synthase. Cytochrome c oxidase is the component of the respiratory chain that catalyzes the reduction of oxygen to water. Electrons originating from reduced cytochrome c in the intermembrane space (IMS) are transferred via the dinuclear copper A center (CU(A)) of subunit 2 and heme A of subunit 1 to the active site in subunit 1, a binuclear center (BNC) formed by heme A3 and copper B (CU(B)). The BNC reduces molecular oxygen to 2 water molecules using 4 electrons from cytochrome c in the IMS and 4 protons from the mitochondrial matrix. The sequence is that of Cytochrome c oxidase subunit 8A, mitochondrial (Cox8a) from Mus musculus (Mouse).